The sequence spans 276 residues: Radial spoke head protein 9 homolog (276 aa).

The protein belongs to the flagellar radial spoke RSP9 family. As to quaternary structure, component of the axonemal radial spoke 1 (RS1) and 2 (RS2) complexes, at least composed of spoke head proteins RSPH1, RSPH3, RSPH9 and the cilia-specific component RSPH4A or sperm-specific component RSPH6A, spoke stalk proteins RSPH14, DNAJB13, DYDC1, ROPN1L and NME5, and the RS1 complex-specific anchor protein IQUB. Interacts with IQUB. Interacts with RSPH3B. Interacts with RSPH4A. Interacts with RSPH6A. Interacts with CFAP61. Interacts with LRRC23.

It is found in the cytoplasm. The protein resides in the cytoskeleton. The protein localises to the cilium axoneme. Its subcellular location is the flagellum axoneme. It localises to the cell projection. It is found in the kinocilium. Functions as part of axonemal radial spoke complexes that play an important part in the motility of sperm and cilia. Essential for both the radial spoke head assembly and the central pair microtubule stability in ependymal motile cilia. Required for motility of olfactory and neural cilia and for the structural integrity of ciliary axonemes in both 9+0 and 9+2 motile cilia. In Bos taurus (Bovine), this protein is Radial spoke head protein 9 homolog (RSPH9).